A 346-amino-acid polypeptide reads, in one-letter code: UDP-N-acetylenolpyruvoylglucosamine reductase (346 aa).

The region spanning 18–189 (LRAQARAFIA…VSVVFALKTH (172 aa)) is the FAD-binding PCMH-type domain. Arginine 165 is an active-site residue. Serine 240 serves as the catalytic Proton donor. Glutamate 336 is an active-site residue.

The protein belongs to the MurB family. FAD is required as a cofactor.

It localises to the cytoplasm. The catalysed reaction is UDP-N-acetyl-alpha-D-muramate + NADP(+) = UDP-N-acetyl-3-O-(1-carboxyvinyl)-alpha-D-glucosamine + NADPH + H(+). The protein operates within cell wall biogenesis; peptidoglycan biosynthesis. Its function is as follows. Cell wall formation. The polypeptide is UDP-N-acetylenolpyruvoylglucosamine reductase (Neisseria meningitidis serogroup C (strain 053442)).